A 334-amino-acid polypeptide reads, in one-letter code: DnaJ protein homolog 1 (334 aa).

One can recognise a J domain in the interval 4–68; sequence DFYKILGLER…KKRDIFDNYG (65 aa). Ser-187 carries the phosphoserine modification.

It localises to the cytoplasm. The sequence is that of DnaJ protein homolog 1 (DnaJ-1) from Drosophila melanogaster (Fruit fly).